A 160-amino-acid chain; its full sequence is SsrA-binding protein (160 aa).

The protein belongs to the SmpB family.

It localises to the cytoplasm. Its function is as follows. Required for rescue of stalled ribosomes mediated by trans-translation. Binds to transfer-messenger RNA (tmRNA), required for stable association of tmRNA with ribosomes. tmRNA and SmpB together mimic tRNA shape, replacing the anticodon stem-loop with SmpB. tmRNA is encoded by the ssrA gene; the 2 termini fold to resemble tRNA(Ala) and it encodes a 'tag peptide', a short internal open reading frame. During trans-translation Ala-aminoacylated tmRNA acts like a tRNA, entering the A-site of stalled ribosomes, displacing the stalled mRNA. The ribosome then switches to translate the ORF on the tmRNA; the nascent peptide is terminated with the 'tag peptide' encoded by the tmRNA and targeted for degradation. The ribosome is freed to recommence translation, which seems to be the essential function of trans-translation. The polypeptide is SsrA-binding protein (Dinoroseobacter shibae (strain DSM 16493 / NCIMB 14021 / DFL 12)).